The sequence spans 128 residues: Holo-[acyl-carrier-protein] synthase (128 aa).

Residues D8 and E60 each coordinate Mg(2+).

It belongs to the P-Pant transferase superfamily. AcpS family. The cofactor is Mg(2+).

The protein resides in the cytoplasm. It catalyses the reaction apo-[ACP] + CoA = holo-[ACP] + adenosine 3',5'-bisphosphate + H(+). Its function is as follows. Transfers the 4'-phosphopantetheine moiety from coenzyme A to a Ser of acyl-carrier-protein. The protein is Holo-[acyl-carrier-protein] synthase of Anaeromyxobacter sp. (strain K).